The primary structure comprises 203 residues: METLSQDSLLECQICFNYYSPRRRPKLLDCKRTCCSVCLQQMRACQKDLRCPWCRGVTKLPPGYSVSQLPDDPDVVAVITIPHASENTPVFIKLPSNGCYMWPLPVSKERALLPGDIGCRLLPGNQQKPVTVVTMPMEQQPLHGNIPQDIVEEEHERRGVVKSSTWSGICTVILVACVLVFLLGIVLHNMSCISKRFTVISCG.

The RING-type; degenerate zinc finger occupies 12–55 (CQICFNYYSPRRRPKLLDCKRTCCSVCLQQMRACQKDLRCPWCR). Residues 167–187 (SGICTVILVACVLVFLLGIVL) form a helical membrane-spanning segment.

Belongs to the RNF152 family.

The protein resides in the lysosome membrane. The enzyme catalyses S-ubiquitinyl-[E2 ubiquitin-conjugating enzyme]-L-cysteine + [acceptor protein]-L-lysine = [E2 ubiquitin-conjugating enzyme]-L-cysteine + N(6)-ubiquitinyl-[acceptor protein]-L-lysine.. The protein operates within protein modification; protein ubiquitination. E3 ubiquitin-protein ligase that acts as a negative regulator of mTORC1 signaling by mediating ubiquitination of RagA/RRAGA and RHEB. Catalyzes 'Lys-63'-linked polyubiquitination of RagA/RRAGA in response to amino acid starvation, thereby regulating mTORC1 signaling. Also mediates monoubiquitination of RHEB, promoting its association with the TSC-TBC complex and subsequent inhibition. Also mediates 'Lys-48'-linked polyubiquitination of target proteins and their subsequent targeting to the proteasome for degradation. In Xenopus laevis (African clawed frog), this protein is E3 ubiquitin-protein ligase rnf152-A.